Here is a 307-residue protein sequence, read N- to C-terminus: Glycerol-3-phosphate dehydrogenase [NAD(P)+] (307 aa).

Trp14, Arg34, Arg35, and Lys82 together coordinate NADPH. Residues Lys82 and Gly110 each coordinate sn-glycerol 3-phosphate. Position 114 (Ser114) interacts with NADPH. Residues Lys165, Asp218, Ser228, Arg229, and Asn230 each coordinate sn-glycerol 3-phosphate. Lys165 serves as the catalytic Proton acceptor. An NADPH-binding site is contributed by Arg229. Glu255 is a binding site for NADPH.

It belongs to the NAD-dependent glycerol-3-phosphate dehydrogenase family.

It localises to the cytoplasm. The enzyme catalyses sn-glycerol 3-phosphate + NAD(+) = dihydroxyacetone phosphate + NADH + H(+). It carries out the reaction sn-glycerol 3-phosphate + NADP(+) = dihydroxyacetone phosphate + NADPH + H(+). It participates in membrane lipid metabolism; glycerophospholipid metabolism. In terms of biological role, catalyzes the reduction of the glycolytic intermediate dihydroxyacetone phosphate (DHAP) to sn-glycerol 3-phosphate (G3P), the key precursor for phospholipid synthesis. The chain is Glycerol-3-phosphate dehydrogenase [NAD(P)+] from Trichormus variabilis (strain ATCC 29413 / PCC 7937) (Anabaena variabilis).